The following is a 1749-amino-acid chain: Intraflagellar transport protein 172 homolog (1749 aa).

Met-1 is modified (N-acetylmethionine). Lys-4 participates in a covalent cross-link: Glycyl lysine isopeptide (Lys-Gly) (interchain with G-Cter in SUMO1). WD repeat units follow at residues 14–53 (DGAA…RDKF), 64–103 (RKSY…GDKK), 110–148 (IQTS…SSTI), 150–191 (GTES…ESQG), 195–233 (NHPC…QTFD), 238–278 (PQER…WEEA), 284–323 (TNLY…SIYK), 483–520 (SHES…CSKT), and 521–559 (MILN…ERVT). One copy of the TPR 1 repeat lies at 593 to 624 (DEGLIEFGTAIDDGNYIRATAFLETLEMTPET). Arg-672 bears the Omega-N-methylarginine mark. TPR repeat units lie at residues 692–725 (EKNY…DECI), 809–842 (GELY…MKAV), 854–887 (VKLE…IKAI), 912–945 (SKYY…KDAI), 947–970 (MYTQ…PEDV), 971–1004 (SVLY…DLAI), 1042–1075 (EGRL…EEAY), 1142–1175 (PEVH…KEAV), 1276–1309 (VEGF…GNSG), 1345–1378 (IGKH…NKAK), 1411–1445 (GVDV…LHKY), 1447–1477 (ALYA…NPQN), and 1574–1607 (DKAF…TDAI).

The protein belongs to the IFT172 family. As to quaternary structure, interacts with IFT88. Interacts with IFT57. Interacts with RABL2/RABL2A; binds preferentially to GDP-bound RABL2.

Its subcellular location is the cell projection. It localises to the cilium. In terms of biological role, required for the maintenance and formation of cilia. Plays an indirect role in hedgehog (Hh) signaling, cilia being required for all activity of the hedgehog pathway. The protein is Intraflagellar transport protein 172 homolog (IFT172) of Homo sapiens (Human).